A 629-amino-acid chain; its full sequence is 1-deoxy-D-xylulose-5-phosphate synthase (629 aa).

Thiamine diphosphate is bound by residues H72 and 113 to 115 (GHA). Position 144 (D144) interacts with Mg(2+). Residues 145–146 (GA), N174, Y287, and E370 each bind thiamine diphosphate. N174 is a Mg(2+) binding site.

This sequence belongs to the transketolase family. DXPS subfamily. As to quaternary structure, homodimer. It depends on Mg(2+) as a cofactor. Requires thiamine diphosphate as cofactor.

It catalyses the reaction D-glyceraldehyde 3-phosphate + pyruvate + H(+) = 1-deoxy-D-xylulose 5-phosphate + CO2. It functions in the pathway metabolic intermediate biosynthesis; 1-deoxy-D-xylulose 5-phosphate biosynthesis; 1-deoxy-D-xylulose 5-phosphate from D-glyceraldehyde 3-phosphate and pyruvate: step 1/1. In terms of biological role, catalyzes the acyloin condensation reaction between C atoms 2 and 3 of pyruvate and glyceraldehyde 3-phosphate to yield 1-deoxy-D-xylulose-5-phosphate (DXP). This chain is 1-deoxy-D-xylulose-5-phosphate synthase, found in Prochlorococcus marinus (strain MIT 9312).